Reading from the N-terminus, the 340-residue chain is Myomesin-1 (340 aa).

The interval Ala177–Arg212 is disordered. A compositionally biased stretch (acidic residues) spans Thr197–Gly206.

As to quaternary structure, homodimer. Interacts with TTN/titin and PNKD. Seems to be expressed in all cardiac and skeletal fibers.

It localises to the cytoplasm. The protein resides in the myofibril. The protein localises to the sarcomere. It is found in the m line. In terms of biological role, major component of the vertebrate myofibrillar M band. Binds myosin, titin, and light meromyosin. This binding is dose dependent. The polypeptide is Myomesin-1 (MYOM1) (Bos taurus (Bovine)).